Consider the following 346-residue polypeptide: Dihydroorotate dehydrogenase (quinone) (346 aa).

FMN contacts are provided by residues 62-66 and Thr-86; that span reads AGMDK. Lys-66 is a binding site for substrate. A substrate-binding site is contributed by 111–115; the sequence is NRMGF. Residues Asn-142 and Asn-175 each contribute to the FMN site. Asn-175 is a substrate binding site. The Nucleophile role is filled by Ser-178. Asn-180 is a binding site for substrate. FMN contacts are provided by Lys-211 and Val-239. 240–241 lines the substrate pocket; it reads NT. FMN-binding positions include Gly-261, Gly-289, and 310–311; that span reads YT.

It belongs to the dihydroorotate dehydrogenase family. Type 2 subfamily. In terms of assembly, monomer. FMN serves as cofactor.

The protein localises to the cell membrane. The enzyme catalyses (S)-dihydroorotate + a quinone = orotate + a quinol. It participates in pyrimidine metabolism; UMP biosynthesis via de novo pathway; orotate from (S)-dihydroorotate (quinone route): step 1/1. In terms of biological role, catalyzes the conversion of dihydroorotate to orotate with quinone as electron acceptor. This chain is Dihydroorotate dehydrogenase (quinone), found in Thermus thermophilus (strain ATCC BAA-163 / DSM 7039 / HB27).